Consider the following 180-residue polypeptide: ATP-dependent protease subunit HslV (180 aa).

T5 is an active-site residue. Na(+) contacts are provided by G165, C168, and T171.

Belongs to the peptidase T1B family. HslV subfamily. As to quaternary structure, a double ring-shaped homohexamer of HslV is capped on each side by a ring-shaped HslU homohexamer. The assembly of the HslU/HslV complex is dependent on binding of ATP.

It localises to the cytoplasm. The catalysed reaction is ATP-dependent cleavage of peptide bonds with broad specificity.. Its activity is regulated as follows. Allosterically activated by HslU binding. In terms of biological role, protease subunit of a proteasome-like degradation complex believed to be a general protein degrading machinery. In Helicobacter pylori (strain ATCC 700392 / 26695) (Campylobacter pylori), this protein is ATP-dependent protease subunit HslV.